Consider the following 392-residue polypeptide: L-rhamnonate dehydratase (392 aa).

Positions 22 and 48 each coordinate substrate. Mg(2+) contacts are provided by Asp-214, Glu-240, and Glu-268. The active-site Proton acceptor is His-318. Residue Glu-338 participates in substrate binding.

The protein belongs to the mandelate racemase/muconate lactonizing enzyme family. RhamD subfamily. In terms of assembly, homooctamer; tetramer of dimers. The cofactor is Mg(2+).

It catalyses the reaction L-rhamnonate = 2-dehydro-3-deoxy-L-rhamnonate + H2O. Catalyzes the dehydration of L-rhamnonate to 2-keto-3-deoxy-L-rhamnonate (KDR). The chain is L-rhamnonate dehydratase from Paraburkholderia phymatum (strain DSM 17167 / CIP 108236 / LMG 21445 / STM815) (Burkholderia phymatum).